The sequence spans 331 residues: 3'-5' exonuclease (331 aa).

The segment at 27–92 is disordered; the sequence is ERVKQTNAAK…EDGPASPEKE (66 aa). The span at 31-43 shows a compositional bias: polar residues; that stretch reads QTNAAKKQIATNN. Basic and acidic residues predominate over residues 47–67; the sequence is KNQDTPEMIKDKENAESENPP. Serine 80 and serine 88 each carry phosphoserine. The 3'-5' exonuclease domain maps to 118–290; it reads SADEVMQWVE…IGQVIYREIE (173 aa). Mg(2+)-binding residues include aspartate 140, glutamate 142, and aspartate 278.

Belongs to the WRNexo family.

The protein localises to the nucleus. Functionally, has exonuclease activity on both single-stranded and duplex templates bearing overhangs, but not blunt ended duplex DNA, and cleaves in a 3'-5' direction. Essential for the formation of DNA replication focal centers. Has an important role in maintaining genome stability. The chain is 3'-5' exonuclease from Drosophila grimshawi (Hawaiian fruit fly).